We begin with the raw amino-acid sequence, 1200 residues long: Zinc finger protein 804A (1200 aa).

Residues 57 to 81 form a C2H2-type zinc finger; the sequence is FYCELCDKQYYKHQEFDNHINSYDH. Disordered regions lie at residues 252–280, 343–367, 582–687, 727–777, 799–828, and 874–949; these read STSH…PEAM, DGPV…RTSA, HWFH…NCGG, EDDG…SDES, QPKK…NYPM, and PYNP…TNPE. A compositionally biased stretch (basic residues) spans 585 to 603; it reads HKSRRKKKRRKLCRYHPGK. The segment covering 604-666 has biased composition (basic and acidic residues); it reads SSKEPEGSGK…ASTHLGEKET (63 aa). 2 stretches are compositionally biased toward polar residues: residues 667–687 and 732–756; these read MNTT…NCGG and LASQ…SLTN. Residues 800-811 are compositionally biased toward basic residues; it reads PKKKRRRKRSRL. Residues 891 to 944 are compositionally biased toward polar residues; sequence TETTPCDSSQTSNDLATPVNVTRDPSNSTTDNTLLEHNQRSQTTNSNEKQTPFK.

This chain is Zinc finger protein 804A (Znf804a), found in Mus musculus (Mouse).